Consider the following 57-residue polypeptide: UPF0391 membrane protein RB0084 (57 aa).

2 helical membrane-spanning segments follow: residues 4–24 (WALI…SGVS) and 33–53 (ILFY…LAVG).

It belongs to the UPF0391 family.

It is found in the cell membrane. In Rhizobium meliloti (strain 1021) (Ensifer meliloti), this protein is UPF0391 membrane protein RB0084.